The following is a 176-amino-acid chain: Transcriptional repressor MprA (176 aa).

An HTH marR-type domain is found at glutamate 26 to serine 160.

Functionally, negative regulator of the multidrug operon emrAB. This is Transcriptional repressor MprA (mprA) from Escherichia coli O157:H7.